Consider the following 87-residue polypeptide: Putative outer membrane protein ArbH (87 aa).

The first 23 residues, 1–23 (MKIKNSYLVIASLLYPISFISTA), serve as a signal peptide directing secretion.

Belongs to the porin LamB (TC 1.B.3) family.

It localises to the cell outer membrane. May be a sugar porin with a broad carbohydrate specificity. The chain is Putative outer membrane protein ArbH (arbH) from Dickeya chrysanthemi (Pectobacterium chrysanthemi).